A 707-amino-acid polypeptide reads, in one-letter code: Elongation factor G (707 aa).

Residues 8–294 enclose the tr-type G domain; that stretch reads ERYRNFGIIA…GVVDYLPSPL (287 aa). GTP-binding positions include 17–24, 92–96, and 146–149; these read AHIDAGKT, DTPGH, and NKMD.

It belongs to the TRAFAC class translation factor GTPase superfamily. Classic translation factor GTPase family. EF-G/EF-2 subfamily.

The protein localises to the cytoplasm. In terms of biological role, catalyzes the GTP-dependent ribosomal translocation step during translation elongation. During this step, the ribosome changes from the pre-translocational (PRE) to the post-translocational (POST) state as the newly formed A-site-bound peptidyl-tRNA and P-site-bound deacylated tRNA move to the P and E sites, respectively. Catalyzes the coordinated movement of the two tRNA molecules, the mRNA and conformational changes in the ribosome. The chain is Elongation factor G from Hyphomonas neptunium (strain ATCC 15444).